We begin with the raw amino-acid sequence, 99 residues long: Nucleoid-associated protein EbfC (99 aa).

It belongs to the YbaB/EbfC family. As to quaternary structure, homodimer.

The protein localises to the cytoplasm. It is found in the nucleoid. In terms of biological role, binds to DNA and alters its conformation. May be involved in regulation of gene expression, nucleoid organization and DNA protection. This Borrelia duttonii (strain Ly) protein is Nucleoid-associated protein EbfC.